A 393-amino-acid chain; its full sequence is 2,3,4,5-tetrahydropyridine-2,6-dicarboxylate N-succinyltransferase (393 aa).

E261 (acyl-anhydride intermediate) is an active-site residue. Residues R263, G278, S281, A304, 319 to 320, G327, K356, and 369 to 372 contribute to the succinyl-CoA site; these read DA and RQDS.

This sequence belongs to the type 2 tetrahydrodipicolinate N-succinyltransferase family. As to quaternary structure, homotrimer.

It localises to the cytoplasm. The catalysed reaction is (S)-2,3,4,5-tetrahydrodipicolinate + succinyl-CoA + H2O = (S)-2-succinylamino-6-oxoheptanedioate + CoA. The protein operates within amino-acid biosynthesis; L-lysine biosynthesis via DAP pathway; LL-2,6-diaminopimelate from (S)-tetrahydrodipicolinate (succinylase route): step 1/3. Its function is as follows. Catalyzes the conversion of the cyclic tetrahydrodipicolinate (THDP) into the acyclic N-succinyl-L-2-amino-6-oxopimelate using succinyl-CoA. This Nitratiruptor sp. (strain SB155-2) protein is 2,3,4,5-tetrahydropyridine-2,6-dicarboxylate N-succinyltransferase.